A 136-amino-acid polypeptide reads, in one-letter code: Cancer/testis antigen 62 (136 aa).

The interval 1–22 (MMHTTSYRRLSPPHLTDQPSAY) is disordered.

As to expression, testis specific. Expressed in cancer cell lines.

The polypeptide is Cancer/testis antigen 62 (CT62) (Homo sapiens (Human)).